The sequence spans 332 residues: Probable allantoicase (332 aa).

Belongs to the allantoicase family.

It carries out the reaction allantoate + H2O = (S)-ureidoglycolate + urea. Its pathway is nitrogen metabolism; (S)-allantoin degradation; (S)-ureidoglycolate from allantoate (aminidohydrolase route): step 1/1. The polypeptide is Probable allantoicase (Pseudomonas aeruginosa (strain LESB58)).